Consider the following 26-residue polypeptide: uncharacterized protein (26 aa).

The span at 1–16 (MPEQKANCSPNGNITV) shows a compositional bias: polar residues. The disordered stretch occupies residues 1 to 26 (MPEQKANCSPNGNITVDSMIMSLGSS).

This is an uncharacterized protein from Saccharomyces cerevisiae (strain ATCC 204508 / S288c) (Baker's yeast).